Consider the following 162-residue polypeptide: Transcription elongation factor GreA (162 aa).

Residues 45–65 are a coiled coil; sequence NAEYHAAKERQLFIEARINEL.

It belongs to the GreA/GreB family.

In terms of biological role, necessary for efficient RNA polymerase transcription elongation past template-encoded arresting sites. The arresting sites in DNA have the property of trapping a certain fraction of elongating RNA polymerases that pass through, resulting in locked ternary complexes. Cleavage of the nascent transcript by cleavage factors such as GreA or GreB allows the resumption of elongation from the new 3'terminus. GreA releases sequences of 2 to 3 nucleotides. This is Transcription elongation factor GreA from Wolinella succinogenes (strain ATCC 29543 / DSM 1740 / CCUG 13145 / JCM 31913 / LMG 7466 / NCTC 11488 / FDC 602W) (Vibrio succinogenes).